The following is a 258-amino-acid chain: Tryptophan synthase alpha chain (258 aa).

Catalysis depends on proton acceptor residues Glu-47 and Asp-58.

Belongs to the TrpA family. As to quaternary structure, tetramer of two alpha and two beta chains.

The catalysed reaction is (1S,2R)-1-C-(indol-3-yl)glycerol 3-phosphate + L-serine = D-glyceraldehyde 3-phosphate + L-tryptophan + H2O. It functions in the pathway amino-acid biosynthesis; L-tryptophan biosynthesis; L-tryptophan from chorismate: step 5/5. The alpha subunit is responsible for the aldol cleavage of indoleglycerol phosphate to indole and glyceraldehyde 3-phosphate. This chain is Tryptophan synthase alpha chain, found in Bacillus thuringiensis subsp. konkukian (strain 97-27).